The sequence spans 233 residues: Octanoyltransferase (233 aa).

In terms of domain architecture, BPL/LPL catalytic spans 33-216 (GRAQDTVILL…HLVRALSSNG (184 aa)). Residues 71 to 78 (RGGRITWH), 146 to 148 (AIG), and 159 to 161 (GFA) each bind substrate. Cysteine 177 serves as the catalytic Acyl-thioester intermediate.

It belongs to the LipB family.

Its subcellular location is the cytoplasm. It catalyses the reaction octanoyl-[ACP] + L-lysyl-[protein] = N(6)-octanoyl-L-lysyl-[protein] + holo-[ACP] + H(+). It participates in protein modification; protein lipoylation via endogenous pathway; protein N(6)-(lipoyl)lysine from octanoyl-[acyl-carrier-protein]: step 1/2. Catalyzes the transfer of endogenously produced octanoic acid from octanoyl-acyl-carrier-protein onto the lipoyl domains of lipoate-dependent enzymes. Lipoyl-ACP can also act as a substrate although octanoyl-ACP is likely to be the physiological substrate. In Clavibacter michiganensis subsp. michiganensis (strain NCPPB 382), this protein is Octanoyltransferase.